The following is a 150-amino-acid chain: D-aminoacyl-tRNA deacylase (150 aa).

Residues Gly-136–Pro-137 carry the Gly-cisPro motif, important for rejection of L-amino acids motif.

Belongs to the DTD family. Homodimer.

The protein resides in the cytoplasm. The catalysed reaction is glycyl-tRNA(Ala) + H2O = tRNA(Ala) + glycine + H(+). It carries out the reaction a D-aminoacyl-tRNA + H2O = a tRNA + a D-alpha-amino acid + H(+). Its function is as follows. An aminoacyl-tRNA editing enzyme that deacylates mischarged D-aminoacyl-tRNAs. Also deacylates mischarged glycyl-tRNA(Ala), protecting cells against glycine mischarging by AlaRS. Acts via tRNA-based rather than protein-based catalysis; rejects L-amino acids rather than detecting D-amino acids in the active site. By recycling D-aminoacyl-tRNA to D-amino acids and free tRNA molecules, this enzyme counteracts the toxicity associated with the formation of D-aminoacyl-tRNA entities in vivo and helps enforce protein L-homochirality. This is D-aminoacyl-tRNA deacylase from Staphylococcus epidermidis (strain ATCC 35984 / DSM 28319 / BCRC 17069 / CCUG 31568 / BM 3577 / RP62A).